Consider the following 104-residue polypeptide: L-rhamnose mutarotase (104 aa).

Tyrosine 18 is a binding site for substrate. The Proton donor role is filled by histidine 22. Substrate is bound by residues tyrosine 41 and 76 to 77 (WW).

It belongs to the rhamnose mutarotase family. Homodimer.

The protein resides in the cytoplasm. The catalysed reaction is alpha-L-rhamnose = beta-L-rhamnose. It functions in the pathway carbohydrate metabolism; L-rhamnose metabolism. In terms of biological role, involved in the anomeric conversion of L-rhamnose. This is L-rhamnose mutarotase from Salmonella agona (strain SL483).